A 421-amino-acid chain; its full sequence is 4-hydroxy-3-methylbut-2-en-1-yl diphosphate synthase (flavodoxin) (421 aa).

[4Fe-4S] cluster-binding residues include cysteine 311, cysteine 314, cysteine 357, and glutamate 364.

The protein belongs to the IspG family. It depends on [4Fe-4S] cluster as a cofactor.

It catalyses the reaction (2E)-4-hydroxy-3-methylbut-2-enyl diphosphate + oxidized [flavodoxin] + H2O + 2 H(+) = 2-C-methyl-D-erythritol 2,4-cyclic diphosphate + reduced [flavodoxin]. Its pathway is isoprenoid biosynthesis; isopentenyl diphosphate biosynthesis via DXP pathway; isopentenyl diphosphate from 1-deoxy-D-xylulose 5-phosphate: step 5/6. Converts 2C-methyl-D-erythritol 2,4-cyclodiphosphate (ME-2,4cPP) into 1-hydroxy-2-methyl-2-(E)-butenyl 4-diphosphate. The protein is 4-hydroxy-3-methylbut-2-en-1-yl diphosphate synthase (flavodoxin) of Xanthomonas euvesicatoria pv. vesicatoria (strain 85-10) (Xanthomonas campestris pv. vesicatoria).